Reading from the N-terminus, the 144-residue chain is Large ribosomal subunit protein uL11 (144 aa).

This sequence belongs to the universal ribosomal protein uL11 family. As to quaternary structure, part of the ribosomal stalk of the 50S ribosomal subunit. Interacts with L10 and the large rRNA to form the base of the stalk. L10 forms an elongated spine to which L12 dimers bind in a sequential fashion forming a multimeric L10(L12)X complex. One or more lysine residues are methylated.

Functionally, forms part of the ribosomal stalk which helps the ribosome interact with GTP-bound translation factors. This is Large ribosomal subunit protein uL11 from Streptomyces griseus subsp. griseus (strain JCM 4626 / CBS 651.72 / NBRC 13350 / KCC S-0626 / ISP 5235).